The sequence spans 159 residues: Ribosomal RNA large subunit methyltransferase H (159 aa).

S-adenosyl-L-methionine-binding positions include Leu76, Gly108, and 127 to 132 (FGLLTL).

The protein belongs to the RNA methyltransferase RlmH family. As to quaternary structure, homodimer.

The protein resides in the cytoplasm. The catalysed reaction is pseudouridine(1915) in 23S rRNA + S-adenosyl-L-methionine = N(3)-methylpseudouridine(1915) in 23S rRNA + S-adenosyl-L-homocysteine + H(+). Functionally, specifically methylates the pseudouridine at position 1915 (m3Psi1915) in 23S rRNA. The chain is Ribosomal RNA large subunit methyltransferase H from Streptococcus agalactiae serotype Ia (strain ATCC 27591 / A909 / CDC SS700).